The following is a 255-amino-acid chain: Accessory gland-specific peptide 26Aa (255 aa).

Residues 1–18 (MNQILLCSQILLLLFAVA) form the signal peptide. Residues 86–110 (PINNSKSRKNSSTLPSQILTDKPNQ) form a disordered region. Residues 87 to 110 (INNSKSRKNSSTLPSQILTDKPNQ) are compositionally biased toward polar residues. N88, N95, and N136 each carry an N-linked (GlcNAc...) asparagine glycan. 2 disordered regions span residues 177 to 197 (NAQN…KDIA) and 235 to 255 (NNPA…PSTT). Positions 183–192 (KPTKSCKKRP) are enriched in basic residues. The segment covering 245-255 (KSPSEGNPSTT) has biased composition (polar residues).

In terms of processing, it undergoes several cleavages as it is secreted and it is further processed in the recipient female. As to expression, main cells of the accessory glands of males.

Its subcellular location is the secreted. It is found in the extracellular space. Functionally, this protein is transferred from male to female's hemolymph during mating, affecting egglaying and behavior after mating. In Drosophila simulans (Fruit fly), this protein is Accessory gland-specific peptide 26Aa (Acp26Aa).